The following is a 134-amino-acid chain: Small ribosomal subunit protein eS24A (134 aa).

Serine 2 carries the N-acetylserine modification. Residues 100-134 (IQKVARQQRKQRKNRGKKVFGTGKRLAKRKSKQQD) form a disordered region. Basic residues-rich tracts occupy residues 105–117 (RQQR…RGKK) and 124–134 (RLAKRKSKQQD).

The protein belongs to the eukaryotic ribosomal protein eS24 family. In terms of assembly, component of the small ribosomal subunit (SSU). Mature yeast ribosomes consist of a small (40S) and a large (60S) subunit. The 40S small subunit contains 1 molecule of ribosomal RNA (18S rRNA) and at least 33 different proteins. The large 60S subunit contains 3 rRNA molecules (25S, 5.8S and 5S rRNA) and at least 46 different proteins.

It is found in the cytoplasm. Its function is as follows. Component of the ribosome, a large ribonucleoprotein complex responsible for the synthesis of proteins in the cell. The small ribosomal subunit (SSU) binds messenger RNAs (mRNAs) and translates the encoded message by selecting cognate aminoacyl-transfer RNA (tRNA) molecules. The large subunit (LSU) contains the ribosomal catalytic site termed the peptidyl transferase center (PTC), which catalyzes the formation of peptide bonds, thereby polymerizing the amino acids delivered by tRNAs into a polypeptide chain. The nascent polypeptides leave the ribosome through a tunnel in the LSU and interact with protein factors that function in enzymatic processing, targeting, and the membrane insertion of nascent chains at the exit of the ribosomal tunnel. The chain is Small ribosomal subunit protein eS24A (rps2401) from Schizosaccharomyces pombe (strain 972 / ATCC 24843) (Fission yeast).